The primary structure comprises 261 residues: Putative hydro-lyase SSP0308 (261 aa).

The protein belongs to the D-glutamate cyclase family.

This Staphylococcus saprophyticus subsp. saprophyticus (strain ATCC 15305 / DSM 20229 / NCIMB 8711 / NCTC 7292 / S-41) protein is Putative hydro-lyase SSP0308.